The sequence spans 215 residues: Sodium channel regulatory subunit beta-2 (215 aa).

Positions 1–29 (MHRDAWLPRPAFSLTGLSLFFSLVPPGRS) are cleaved as a signal peptide. At 30–157 (MEVTVPATLN…XEEPPERDST (128 aa)) the chain is on the extracellular side. The 123-residue stretch at 32 to 154 (VTVPATLNVL…QVLXEEPPER (123 aa)) folds into the Ig-like C2-type domain. N42, N66, and N74 each carry an N-linked (GlcNAc...) asparagine glycan. 2 cysteine pairs are disulfide-bonded: C50/C127 and C72/C75. The chain crosses the membrane as a helical span at residues 158-179 (VAVIVGASVGGFLAVVILVLMV). At 180 to 215 (VKCVRRKKEQKLSTDDLKTEEEGKTDGEGNPDDGAK) the chain is on the cytoplasmic side. The interval 187–215 (KEQKLSTDDLKTEEEGKTDGEGNPDDGAK) is disordered. The span at 189–215 (QKLSTDDLKTEEEGKTDGEGNPDDGAK) shows a compositional bias: basic and acidic residues. The residue at position 192 (S192) is a Phosphoserine. At T204 the chain carries Phosphothreonine.

The protein belongs to the sodium channel auxiliary subunit SCN2B (TC 8.A.17) family. In terms of assembly, a voltage-gated sodium (Nav) channel consists of an ion-conducting pore-forming alpha subunit functional on its own that is regulated by one or more beta subunits. The beta subunit SCN2B is disulfide-linked to the pore-forming alpha subunit. Interacts with SCN1A; regulatory subunit of SCN1A/Nav1.1. Interacts with SCN2A; regulatory subunit of SCN2A/Nav1.2. Interacts with SCN3A; regulatory subunit of SCN3A/Nav1.3. Interacts with SCN5A; regulatory subunit of SCN5A/Nav1.5. Interacts with SCN8A; regulatory subunit of SCN8A/Nav1.6. Interacts with SCN9A; regulatory subunit of SCN9A/Nav1.7. Interacts with SCN10A; regulatory subunit of SCN10A/Nav1.8. Interacts with TNR; may play a crucial role in clustering and regulation of activity of SCN2B-containing Nav channels at nodes of Ranvier.

It is found in the cell membrane. It localises to the cell projection. Its subcellular location is the axon. Functionally, regulatory subunit of multiple voltage-gated sodium (Nav) channels, that directly mediate the depolarization of excitable membranes. Navs, also called VGSCs (voltage-gated sodium channels) or VDSCs (voltage-dependent sodium channels), operate by switching between closed and open conformations depending on the voltage difference across the membrane. In the open conformation they allow Na(+) ions to selectively pass through the pore, along their electrochemical gradient. The influx of Na+ ions provokes membrane depolarization, initiating the propagation of electrical signals throughout cells and tissues. The accessory beta subunits participate in localization and functional modulation of the Nav channels. Modulates the activity of SCN1A/Nav1.1, SCN2A/Nav1.2, SCN2A/Nav1.3, SCN5A/Nav1.5, SCN8A/Nav1.6, SCN9A/Nav1.7 and SCN10A/Nav1.8. The protein is Sodium channel regulatory subunit beta-2 of Canis lupus familiaris (Dog).